The primary structure comprises 606 residues: MAVPGPTARAGARPRLDLQLVQRFVRIQKVFFPSWSSQNVLMFMTLLCVTLLEQLVIYQVGLIPSQYYGVLGNKDLDGFKALTLLAVTLIVLNSTLKSFDQFTCNLLYVSWRKDLTEHLHHLYFRARVYYTLNVLRDDIDNPDQRISQDVERFCRQLSSVTSKLIISPFTLTYYTYQCFQSTGWLGPVSIFGYFIVGTMVNKTLMGPIVTKLVQQEKLEGDFRFKHMQIRVNAEPAAFYRAGLVEHMRTDRRLQRLLQTQRELMSRELWLYIGINTFDYLGSILSYVVIAIPIFSGVYGDLSPTELSTLVSKNAFVCIYLISCFTQLIDLSTTLSDVAGYTHRIGELQEALLDMSRKSQDCEALGESEWDLDKTPGCPTTEPSDTAFLLDRVSILAPSSDKPLIKDLSLKICEGQSLLITGNTGTGKTSLLRVLGGLWEGMKGSVQMLADFGPHGVLFLPQKPFFTDGTLREQVIYPLKEIYPDSGSADDERIVRFLELAGLSSLVARTGGLDQQVDWNWYDVLSPGEMQRLSFARLFYLQPKYAVLDEATSALTEEAESELYRIGQQLGMTFISVGHRPSLEKFHSWVLRLHGGGSWELTRIKLE.

The ABC transmembrane type-1 domain maps to Asn39–Thr332. 5 helical membrane passes run Phe43–Ile63, Leu76–Leu96, Ile190–Thr210, Tyr279–Gly299, and Ala314–Leu334. In terms of domain architecture, ABC transporter spans Leu389 to Ile603. Gly421–Thr428 serves as a coordination point for ATP.

The protein belongs to the ABC transporter superfamily. ABCD family. Peroxisomal fatty acyl CoA transporter (TC 3.A.1.203) subfamily. In terms of assembly, homodimer or heterodimer. Interacts with LMBRD1; this interaction induces the translocation of ABCD4 from the ER to the lysosome membrane. Interacts with LMBRD1 and MMACHC; this interaction ensures the transport of cobalamin from the lysosome to the cytosol.

It localises to the endoplasmic reticulum membrane. The protein localises to the lysosome membrane. The enzyme catalyses an R-cob(III)alamin(out) + ATP + H2O = an R-cob(III)alamin(in) + ADP + phosphate + H(+). In terms of biological role, lysosomal membrane protein that transports cobalamin (Vitamin B12) from the lysosomal lumen to the cytosol in an ATP-dependent manner. Targeted by LMBRD1 lysosomal chaperone from the endoplasmic reticulum to the lysosomal membrane. Then forms a complex with lysosomal chaperone LMBRD1 and cytosolic MMACHC to transport cobalamin across the lysosomal membrane. The polypeptide is Lysosomal cobalamin transporter ABCD4 (Mus musculus (Mouse)).